The primary structure comprises 319 residues: MPRGQKSKLRAREKRRKARDETRGLNVPQVTEAEEEEAPCCSSSVSGGAASSSPAAGIPQEPQRAPTTAAAAAAGVSSTKSKKGAKSHQGEKNASSSQASTSTKSPSEDPLTRKSGSLVQFLLYKYKIKKSVTKGEMLKIVGKRFREHFPEILKKASEGLSVVFGLELNKVNPNGHTYTFIDKVDLTDEESLLSSWDFPRRKLLMPLLGVIFLNGNSATEEEIWEFLNMLGVYDGEEHSVFGEPWKLITKDLVQEKYLEYKQVPSSDPPRFQFLWGPRAYAETSKMKVLEFLAKVNGTTPCAFPTHYEEALKDEEKAGV.

Positions 1–17 (MPRGQKSKLRAREKRRK) are enriched in basic residues. A disordered region spans residues 1–112 (MPRGQKSKLR…TKSPSEDPLT (112 aa)). Composition is skewed to low complexity over residues 39–57 (PCCSSSVSGGAASSSPAAG), 67–79 (TTAAAAAAGVSST), and 94–105 (ASSSQASTSTKS). A phosphoserine mark is found at serine 77 and serine 105. Residues 111-310 (LTRKSGSLVQ…CAFPTHYEEA (200 aa)) form the MAGE domain.

In terms of assembly, interacts with TRIM28. As to expression, expressed in testis and placenta, and in a significant fraction of tumors of various histologic types.

In terms of biological role, may enhance ubiquitin ligase activity of RING-type zinc finger-containing E3 ubiquitin-protein ligases. Proposed to act through recruitment and/or stabilization of the Ubl-conjugating enzyme (E2) at the E3:substrate complex. The protein is Melanoma-associated antigen B2 (MAGEB2) of Homo sapiens (Human).